We begin with the raw amino-acid sequence, 180 residues long: Large ribosomal subunit protein uL5 (180 aa).

This sequence belongs to the universal ribosomal protein uL5 family. In terms of assembly, part of the 50S ribosomal subunit; part of the 5S rRNA/L5/L18/L25 subcomplex. Contacts the 5S rRNA and the P site tRNA. Forms a bridge to the 30S subunit in the 70S ribosome.

Its function is as follows. This is one of the proteins that bind and probably mediate the attachment of the 5S RNA into the large ribosomal subunit, where it forms part of the central protuberance. In the 70S ribosome it contacts protein S13 of the 30S subunit (bridge B1b), connecting the 2 subunits; this bridge is implicated in subunit movement. Contacts the P site tRNA; the 5S rRNA and some of its associated proteins might help stabilize positioning of ribosome-bound tRNAs. The polypeptide is Large ribosomal subunit protein uL5 (Lactobacillus johnsonii (strain CNCM I-12250 / La1 / NCC 533)).